We begin with the raw amino-acid sequence, 1024 residues long: Multidrug resistance protein MdtC (1024 aa).

12 helical membrane passes run 3 to 23 (FLSLFIYRPVATSLLTLALVL), 333 to 353 (EVEQSLAVSVGLVVLVVFAFL), 360 to 380 (LIPAVAVPVSLIGTFAAMYLC), 387 to 407 (LSLMALTVASGFVVDDAIVVL), 431 to 451 (VGFTVVSMSVSLIAVFIPLLM), 463 to 483 (FAITLSVSIAISLVISLTLTP), 528 to 548 (WALLVFVASLGLTVYLFISMP), 853 to 873 (LWLILAAIATVYIVLGMLYES), 875 to 895 (VHPLTILSTLPSAGMGALLAL), 897 to 917 (LFNTPFSLIALIGILLLIGIV), 953 to 973 (PIIMTTLAAMLGALPLVLSSG), and 984 to 1004 (ITIVGGLVVSQLLTLFTTPVV).

This sequence belongs to the resistance-nodulation-cell division (RND) (TC 2.A.6) family. MdtC subfamily. Part of a tripartite efflux system composed of MdtA, MdtB and MdtC. MdtC forms a heteromultimer with MdtB.

Its subcellular location is the cell inner membrane. This is Multidrug resistance protein MdtC from Erwinia amylovora (strain ATCC 49946 / CCPPB 0273 / Ea273 / 27-3).